A 373-amino-acid polypeptide reads, in one-letter code: Arfaptin-1 (373 aa).

The segment at 1 to 47 (MAQESPKNSAAEIPVTSNGEVDDSREHSFNRDLKHSLPSGLGLSETQ) is disordered. N-acetylalanine is present on Ala-2. 7 positions are modified to phosphoserine: Ser-5, Ser-28, Ser-36, Ser-39, Ser-69, Ser-79, and Ser-132. Over residues 22-35 (DDSREHSFNRDLKH) the composition is skewed to basic and acidic residues. One can recognise an AH domain in the interval 153–353 (TVDLELEAQI…NQKQLEQTLK (201 aa)). Thr-361 is modified (phosphothreonine).

In terms of assembly, forms homodimers or heterodimers with ARFIP2. Interacts with non-myristoylated GTP-bound ARF3, but not to GDP-bound ARF3. Interacts with ARF1. Binds with lower affinity to ARF5 and with very little affinity to ARF6. Interacts with ARL1. Interacts with ATG9A. Phosphorylated by PRKD1; phosphorylation delocalizes ARFIP1 from the Golgi and disrupts its ability to inhibit the activity of ADP-ribosylation factor, an important component of the vesicle scission machinery. In terms of tissue distribution, ubiquitously expressed. Higher levels in liver, pancreas, placenta, skeletal muscle and heart.

The protein localises to the golgi apparatus. It is found in the trans-Golgi network membrane. Its function is as follows. Plays a role in controlling biogenesis of secretory granules at the trans-Golgi network. Mechanistically, binds ARF-GTP at the neck of a growing secretory granule precursor and forms a protective scaffold. Once the granule precursor has been completely loaded, active PRKD1 phosphorylates ARFIP1 and releases it from ARFs. In turn, ARFs induce fission. Through this mechanism, ensures proper secretory granule formation at the Golgi of pancreatic beta cells. The polypeptide is Arfaptin-1 (Homo sapiens (Human)).